We begin with the raw amino-acid sequence, 184 residues long: Thymidine kinase (184 aa).

ATP contacts are provided by residues 10–17 (GPMYSGKT) and 83–86 (DEVQ). Glu84 serves as the catalytic Proton acceptor. 4 residues coordinate Zn(2+): Cys140, Cys143, Cys173, and Cys176.

Belongs to the thymidine kinase family. Homotetramer.

The protein resides in the cytoplasm. The catalysed reaction is thymidine + ATP = dTMP + ADP + H(+). In Thermotoga sp. (strain RQ2), this protein is Thymidine kinase.